We begin with the raw amino-acid sequence, 508 residues long: MIGIYLLIAAVTLLYVYLKWTFSYWDRKGFPSTGVSIPFGALESVTKGKRSFGMAIYDMYKSTKEPVIGLYLTLRPALLVRDAQLAHDVLVKDFASFHDRGVYVDEKNDPMSASLFQMEGASWRALRNKLTPSFTSGKLKAMFETSDSVGDKLVDSIRKQLPANGAKELELKKLMATYAIDIIATTIFGLDVDSFADPNNEFQIISKKVNRNNIEDIIRGTSSFLYPGLEKFFVKIGWKQEATERMRELSNRTVDLREQNNIVRKDLLQLLLQLRNQGKINTDDNIWSAESTKNGVKSMSKDLIAGQLFLFYVAGYETTASTTSFTLYELTQNPEVMEKAKEDVRSAIEKHGGKLTYDAISDMKYLEACILETARKYPALPLLNRICTKDYPVPDSKLVIQKGTPIIISLIGMHRDEEYFPDPLAYKPERYLENGKDYTQAAYLPFGEGPRMCIGARMGKVNVKIAIAKVLSNFDLEIRKEKCEIEFGVYGIPLMPKSGVPVRLSLKK.

Residue Cys453 coordinates heme.

Belongs to the cytochrome P450 family. It depends on heme as a cofactor.

It localises to the endoplasmic reticulum membrane. The protein resides in the microsome membrane. May be involved in the metabolism of insect hormones and in the breakdown of synthetic insecticides. The polypeptide is Probable cytochrome P450 6d5 (Cyp6d5) (Drosophila melanogaster (Fruit fly)).